The primary structure comprises 179 residues: Large ribosomal subunit protein uL6 (179 aa).

Belongs to the universal ribosomal protein uL6 family. As to quaternary structure, part of the 50S ribosomal subunit.

Functionally, this protein binds to the 23S rRNA, and is important in its secondary structure. It is located near the subunit interface in the base of the L7/L12 stalk, and near the tRNA binding site of the peptidyltransferase center. The polypeptide is Large ribosomal subunit protein uL6 (Synechococcus sp. (strain CC9311)).